The sequence spans 156 residues: ATP synthase subunit b (156 aa).

A helical transmembrane segment spans residues 7-29; sequence LFGQTIAFAIFVWFCMKFVWPPL.

The protein belongs to the ATPase B chain family. In terms of assembly, F-type ATPases have 2 components, F(1) - the catalytic core - and F(0) - the membrane proton channel. F(1) has five subunits: alpha(3), beta(3), gamma(1), delta(1), epsilon(1). F(0) has three main subunits: a(1), b(2) and c(10-14). The alpha and beta chains form an alternating ring which encloses part of the gamma chain. F(1) is attached to F(0) by a central stalk formed by the gamma and epsilon chains, while a peripheral stalk is formed by the delta and b chains.

Its subcellular location is the cell inner membrane. Functionally, f(1)F(0) ATP synthase produces ATP from ADP in the presence of a proton or sodium gradient. F-type ATPases consist of two structural domains, F(1) containing the extramembraneous catalytic core and F(0) containing the membrane proton channel, linked together by a central stalk and a peripheral stalk. During catalysis, ATP synthesis in the catalytic domain of F(1) is coupled via a rotary mechanism of the central stalk subunits to proton translocation. Its function is as follows. Component of the F(0) channel, it forms part of the peripheral stalk, linking F(1) to F(0). The protein is ATP synthase subunit b of Ectopseudomonas mendocina (strain ymp) (Pseudomonas mendocina).